Here is a 125-residue protein sequence, read N- to C-terminus: Small ribosomal subunit protein eS8 (125 aa).

It belongs to the eukaryotic ribosomal protein eS8 family. Part of the 30S ribosomal subunit.

This chain is Small ribosomal subunit protein eS8, found in Methanosarcina barkeri (strain Fusaro / DSM 804).